We begin with the raw amino-acid sequence, 133 residues long: Small ribosomal subunit protein uS8 (133 aa).

The segment at 1-28 (MANHDPISDMLTRIRNASEKRHEKTKVP) is disordered. Residues 16–26 (NASEKRHEKTK) are compositionally biased toward basic and acidic residues.

Belongs to the universal ribosomal protein uS8 family. Part of the 30S ribosomal subunit. Contacts proteins S5 and S12.

In terms of biological role, one of the primary rRNA binding proteins, it binds directly to 16S rRNA central domain where it helps coordinate assembly of the platform of the 30S subunit. This chain is Small ribosomal subunit protein uS8, found in Prochlorococcus marinus (strain NATL2A).